The primary structure comprises 286 residues: Ribosomal RNA small subunit methyltransferase H (286 aa).

S-adenosyl-L-methionine-binding positions include 17–19 (AGH), D36, F63, D84, and Q91.

Belongs to the methyltransferase superfamily. RsmH family.

Its subcellular location is the cytoplasm. The enzyme catalyses cytidine(1402) in 16S rRNA + S-adenosyl-L-methionine = N(4)-methylcytidine(1402) in 16S rRNA + S-adenosyl-L-homocysteine + H(+). Its function is as follows. Specifically methylates the N4 position of cytidine in position 1402 (C1402) of 16S rRNA. This is Ribosomal RNA small subunit methyltransferase H from Metamycoplasma arthritidis (strain 158L3-1) (Mycoplasma arthritidis).